Consider the following 566-residue polypeptide: Arginine--tRNA ligase (566 aa).

Positions 121 to 131 (ANPNGPFHIGH) match the 'HIGH' region motif.

It belongs to the class-I aminoacyl-tRNA synthetase family.

The protein localises to the cytoplasm. The enzyme catalyses tRNA(Arg) + L-arginine + ATP = L-arginyl-tRNA(Arg) + AMP + diphosphate. In Methanococcus maripaludis (strain C5 / ATCC BAA-1333), this protein is Arginine--tRNA ligase.